The following is a 311-amino-acid chain: R2-like ligand binding oxidase (311 aa).

The Mn(2+) site is built by Glu68, Glu101, and His104. A cross-link (3-(O4'-tyrosyl)-valine (Val-Tyr)) is located at residues 71–162; sequence VTQDIQPFMA…AAQVRASVTY (92 aa). Glu101 is a binding site for Fe cation. Fe cation-binding residues include Glu167, Glu202, and His205.

Belongs to the ribonucleoside diphosphate reductase small chain family. R2-like ligand binding oxidase subfamily. As to quaternary structure, homodimer. Fe cation is required as a cofactor. Mn(2+) serves as cofactor.

In terms of biological role, probable oxidase that might be involved in lipid metabolism. The protein is R2-like ligand binding oxidase of Mycolicibacterium paratuberculosis (strain ATCC BAA-968 / K-10) (Mycobacterium paratuberculosis).